Here is a 690-residue protein sequence, read N- to C-terminus: MDFHNILVMASEQQGLNAVPKRYSLAVGPPKKVPKVKGVESAAVQAFLRRKEEEKRKKELEEKRKKERLLAKRIELKHDRKARAMASRTKDNFYGYNGIPVEEKPKKRRRTCENVSQAPEAEYATENEAEQLEFAQTESEYEQEEYDEKPSKAAVKPKAPPKSAPAPLNFADLLRLAEKKQYEPVEIKVVKKIEERPRTAEELREREYLERKNKRVETQKKKSEKEVKSAGISSSSKKATSLKECADAKLSRSAADKHAPPKSSLSSLSGTDKKPKAPALTEKHSRSFSSSKLSQMEKGKTSQNSSLKSPAAGSHSKLPANGMGKTGSSFPVPSSKPMANGAQRLPSAKESSLKKPVHTKPGNAAALQHETNSSAKRPSSSLGKGGSGHPAGGSSAGPGRSSSNSGTGPGRPGSVSSPGPGRQGSSSAAGPGRPSSSSSLGPGRLGSGSGVGPGRPGGSSSTGLGRPGGSSGTGPGRPGNSTNTAPGRLGSGMGTGPGRPGVGPSAGPGRPGSSSGTGPGRPGVSPSAGPGRPGLTAVKPRCTVVSETISSKNLVTRPSNGQINGMRSPPGHRPVFRPQGIGRPPVGYKRQIDDDDDDDEYDSEMDDFIEDEGEPQEEISKHIREIFGYDRKRYKDESDYALRYMESSWREQQKEEARSLRLGVQEDLEELRREEEELKRKRQSKKLRTR.

Residues 1–579 form an important for interaction with DNA region; that stretch reads MDFHNILVMA…PGHRPVFRPQ (579 aa). A coiled-coil region spans residues 40 to 82; the sequence is ESAAVQAFLRRKEEEKRKKELEEKRKKERLLAKRIELKHDRKA. 2 disordered regions span residues 105 to 167 and 186 to 619; these read PKKR…APAP and EIKV…QEEI. Residues 186–228 show a composition bias toward basic and acidic residues; sequence EIKVVKKIEERPRTAEELREREYLERKNKRVETQKKKSEKEVK. A compositionally biased stretch (low complexity) spans 229 to 243; sequence SAGISSSSKKATSLK. Basic and acidic residues-rich tracts occupy residues 244-259 and 271-285; these read ECAD…DKHA and TDKK…EKHS. Residues 369–380 show a composition bias toward polar residues; sequence HETNSSAKRPSS. The segment covering 383 to 396 has biased composition (gly residues); sequence GKGGSGHPAGGSSA. Over residues 397–442 the composition is skewed to low complexity; sequence GPGRSSSNSGTGPGRPGSVSSPGPGRQGSSSAAGPGRPSSSSSLGP. Gly residues-rich tracts occupy residues 443–457, 465–477, and 489–521; these read GRLG…GRPG, GRPG…GPGR, and LGSG…GPGR. The span at 545–565 shows a compositional bias: polar residues; sequence VSETISSKNLVTRPSNGQING. Residues 580–690 form an important for interaction with histones region; it reads GIGRPPVGYK…KRQSKKLRTR (111 aa). Residues 593–617 are compositionally biased toward acidic residues; it reads DDDDDDDEYDSEMDDFIEDEGEPQE. Positions 650 to 690 form a coiled coil; sequence REQQKEEARSLRLGVQEDLEELRREEEELKRKRQSKKLRTR.

Belongs to the SPT2 family. In terms of assembly, interacts with POLR1A. Interacts with histones. Interacts with a heterotetrameric complex formed by histone H3 and H4, especially when the histone tetramer is not bound to DNA.

It localises to the nucleus. Its subcellular location is the nucleolus. Functionally, histone chaperone that stabilizes pre-existing histone tetramers and regulates replication-independent histone exchange on chromatin. Required for normal chromatin refolding in the coding region of transcribed genes, and for the suppression of spurious transcription. Binds DNA and histones and promotes nucleosome assembly (in vitro). Modulates RNA polymerase 1-mediated transcription. Required for optimal growth in the presence of the DNA damaging agents actinomycin D or mitomycin C (in vitro). Facilitates formation of tetrameric histone complexes containing histone H3 and H4. Modulates RNA polymerase 1-mediated transcription. Binds DNA, with a preference for branched DNA species, such as Y-form DNA and Holliday junction DNA. This chain is Protein SPT2 homolog (SPTY2D1), found in Gallus gallus (Chicken).